Reading from the N-terminus, the 135-residue chain is UPF0201 protein TON_1346 (135 aa).

This sequence belongs to the UPF0201 family.

This Thermococcus onnurineus (strain NA1) protein is UPF0201 protein TON_1346.